The primary structure comprises 319 residues: Protease HtpX homolog (319 aa).

Transmembrane regions (helical) follow at residues 6 to 26 and 28 to 48; these read TAML…VIGG and GGMM…YWNS. Histidine 130 contributes to the Zn(2+) binding site. Glutamate 131 is an active-site residue. Histidine 134 is a binding site for Zn(2+). A run of 2 helical transmembrane segments spans residues 145–165 and 172–192; these read LTAT…FFGG and PLGF…AMLV. Glutamate 201 is a Zn(2+) binding site. Residues 277–319 form a disordered region; that stretch reads MARETSTGSTAPVRPDNAGRKSRSVPRTGWGRGGSEPPKGPWS.

This sequence belongs to the peptidase M48B family. It depends on Zn(2+) as a cofactor.

It is found in the cell inner membrane. This is Protease HtpX homolog from Rhizobium meliloti (strain 1021) (Ensifer meliloti).